A 190-amino-acid polypeptide reads, in one-letter code: GATA transcription factor 17 (190 aa).

The segment covering M1–S14 has biased composition (basic and acidic residues). 2 disordered regions span residues M1 to R42 and R77 to N101. A GATA-type zinc finger spans residues G38 to R92.

The protein belongs to the type IV zinc-finger family. Class B subfamily.

Its subcellular location is the nucleus. Functionally, transcriptional regulator that specifically binds 5'-GATA-3' or 5'-GAT-3' motifs within gene promoters. The polypeptide is GATA transcription factor 17 (GATA17) (Arabidopsis thaliana (Mouse-ear cress)).